A 682-amino-acid chain; its full sequence is Protein ACTIVITY OF BC1 COMPLEX KINASE 1, chloroplastic (682 aa).

Residues 1 to 79 (MESIHCNSLL…NSTDASVMTT (79 aa)) constitute a chloroplast transit peptide. Residues 236-567 (KISSQTIAAA…IQVLFKDGVF (332 aa)) form the Protein kinase domain. ATP-binding positions include 242 to 250 (IAAASLGQV) and Lys265. The Proton acceptor role is filled by Asp400.

Belongs to the protein kinase superfamily. ADCK protein kinase family. As to quaternary structure, interacts with ABC1K3 in plastoglobules (PG). As to expression, expressed in all tissues (e.g. especially in leaves) at all developmental stages from seed germination to flowering, except in the root tips.

Its subcellular location is the plastid. The protein resides in the chloroplast. It is found in the plastoglobule. It catalyses the reaction L-seryl-[protein] + ATP = O-phospho-L-seryl-[protein] + ADP + H(+). The enzyme catalyses L-threonyl-[protein] + ATP = O-phospho-L-threonyl-[protein] + ADP + H(+). Its function is as follows. Kinase that can phosphorylate the tocopherol cyclase VTE1, a key enzyme of tocopherol (vitamin E) metabolism and involved in the recycling of oxidated alpha-tocopherol quinone, possibly stabilizing it at plastoglobules. Also regulates plastoglobule protein composition. Prevents photodamage of chloroplasts under continuous red light, thus working in opposition to ABC1K3. Together with ABC1K1, contributes to plastoglobule (PG) function in prenyl-lipid metabolism, stress response, and thylakoid remodeling. Involved in chlorophyll degradation and in the maintenance of the number of chlorophyll-binding photosynthetic thylakoid membranes. Ensures photosynthetic electron transport by regulating the homeostasis of plastoquinone, beta-carotene and xanthophyll lutein, as well as membrane antioxidant tocopherol metabolism. Seems to affect specifically stability or turnover of D1 protein, product of psbA, one of the four core subunits of the photosystem II (PSII). Required for photooxidative stress responses, including the induction of oxidative stress response genes (e.g. FSD1, CSD1, CAT1, and UTG71C1), to prevent photosystem II core and chlorophyll degradations. The chain is Protein ACTIVITY OF BC1 COMPLEX KINASE 1, chloroplastic from Arabidopsis thaliana (Mouse-ear cress).